A 323-amino-acid chain; its full sequence is NADH-ubiquinone oxidoreductase chain 1 (323 aa).

Helical transmembrane passes span Leu-8–Ile-28, Leu-74–Leu-94, Leu-105–Gly-125, Ser-150–Phe-170, Thr-176–Ala-196, Leu-227–Phe-247, Glu-258–Val-278, and Phe-298–Ser-318.

It belongs to the complex I subunit 1 family.

The protein localises to the mitochondrion inner membrane. It carries out the reaction a ubiquinone + NADH + 5 H(+)(in) = a ubiquinol + NAD(+) + 4 H(+)(out). Core subunit of the mitochondrial membrane respiratory chain NADH dehydrogenase (Complex I) that is believed to belong to the minimal assembly required for catalysis. Complex I functions in the transfer of electrons from NADH to the respiratory chain. The immediate electron acceptor for the enzyme is believed to be ubiquinone. The protein is NADH-ubiquinone oxidoreductase chain 1 (MT-ND1) of Latimeria chalumnae (Coelacanth).